A 368-amino-acid chain; its full sequence is D-amino-acid oxidase (368 aa).

The FAD site is built by Ala-11, Ser-14, Lys-35, His-36, Cys-46, Ser-47, Gly-51, Asn-53, and Phe-174. The cysteines at positions 230 and 285 are disulfide-linked. Residues Tyr-244, Tyr-260, and Arg-308 each contribute to the (R)-lactate site. Anthranilate-binding residues include Tyr-244, Tyr-260, and Arg-308. Residues Arg-308, Gly-334, Gly-337, Tyr-338, and Gln-339 each contribute to the FAD site. The short motif at Ala-366 to Leu-368 is the Microbody targeting signal element.

It belongs to the DAMOX/DASOX family. Homotetramer. FAD is required as a cofactor. In terms of processing, the disulfide bond might contribute to the high thermal stability of the protein.

The protein resides in the peroxisome matrix. The catalysed reaction is a D-alpha-amino acid + O2 + H2O = a 2-oxocarboxylate + H2O2 + NH4(+). It carries out the reaction D-alanine + O2 + H2O = pyruvate + H2O2 + NH4(+). The enzyme catalyses D-glutamate + O2 + H2O = H2O2 + 2-oxoglutarate + NH4(+). It catalyses the reaction D-serine + O2 + H2O = 3-hydroxypyruvate + H2O2 + NH4(+). The catalysed reaction is D-phenylalanine + O2 + H2O = 3-phenylpyruvate + H2O2 + NH4(+). It carries out the reaction D-arginine + O2 + H2O = 5-guanidino-2-oxopentanoate + H2O2 + NH4(+). The enzyme catalyses D-methionine + O2 + H2O = 4-methylsulfanyl-2-oxobutanoate + H2O2 + NH4(+). It catalyses the reaction D-leucine + O2 + H2O = 4-methyl-2-oxopentanoate + H2O2 + NH4(+). The catalysed reaction is D-lysine + O2 + H2O = 6-amino-2-oxohexanoate + H2O2 + NH4(+). It carries out the reaction D-valine + O2 + H2O = 3-methyl-2-oxobutanoate + H2O2 + NH4(+). The enzyme catalyses D-histidine + O2 + H2O = 3-(imidazol-5-yl)pyruvate + H2O2 + NH4(+). It catalyses the reaction D-glutamine + O2 + H2O = 2-oxoglutaramate + H2O2 + NH4(+). The catalysed reaction is D-isoleucine + O2 + H2O = (R)-3-methyl-2-oxopentanoate + H2O2 + NH4(+). It carries out the reaction D-allo-isoleucine + O2 + H2O = (S)-3-methyl-2-oxopentanoate + H2O2 + NH4(+). The enzyme catalyses D-threonine + O2 + H2O = (S)-3-hydroxy-2-oxobutanoate + H2O2 + NH4(+). It catalyses the reaction D-asparagine + O2 + H2O = 2-oxosuccinamate + H2O2 + NH4(+). The catalysed reaction is D-tryptophan + O2 + H2O = indole-3-pyruvate + H2O2 + NH4(+). It carries out the reaction D-tyrosine + O2 + H2O = 3-(4-hydroxyphenyl)pyruvate + H2O2 + NH4(+). With respect to regulation, partially inhibited by benzoate, crotonate, and D-malate. Functionally, catalyzes the oxidative deamination of D-amino acids with broad substrate specificity. Enables the organism to utilize D-amino acids as a source of nutrients. Unusually, has high activity on D-glutamate. The polypeptide is D-amino-acid oxidase (Talaromyces emersonii (Thermophilic fungus)).